The following is a 100-amino-acid chain: Small ribosomal subunit protein uS14c (100 aa).

The protein belongs to the universal ribosomal protein uS14 family. As to quaternary structure, part of the 30S ribosomal subunit.

It is found in the plastid. The protein resides in the chloroplast. Binds 16S rRNA, required for the assembly of 30S particles. This is Small ribosomal subunit protein uS14c from Pyropia yezoensis (Susabi-nori).